The chain runs to 180 residues: MLTRKQKELLVEELSAIFEKSSLILFSDYKGLNVEQITKLRRKLREKLANGARYRVIKNSVAYLALKKAGYSVDEIEEVFSGPLAILYVEEGDPIEAIKIIYDFSKETKGLPSFKGLYLDGRFFDAEEVENLSKLPSKEQLLAMVVSGVQGPIRGFVNVLSGTLKSLLYALNAIKDKKSE.

Belongs to the universal ribosomal protein uL10 family. As to quaternary structure, part of the ribosomal stalk of the 50S ribosomal subunit. The N-terminus interacts with L11 and the large rRNA to form the base of the stalk. The C-terminus forms an elongated spine to which L12 dimers bind in a sequential fashion forming a multimeric L10(L12)X complex.

Functionally, forms part of the ribosomal stalk, playing a central role in the interaction of the ribosome with GTP-bound translation factors. The protein is Large ribosomal subunit protein uL10 of Thermosipho melanesiensis (strain DSM 12029 / CIP 104789 / BI429).